A 327-amino-acid chain; its full sequence is Aspartate--ammonia ligase (327 aa).

The protein belongs to the class-II aminoacyl-tRNA synthetase family. AsnA subfamily.

Its subcellular location is the cytoplasm. It catalyses the reaction L-aspartate + NH4(+) + ATP = L-asparagine + AMP + diphosphate + H(+). It functions in the pathway amino-acid biosynthesis; L-asparagine biosynthesis; L-asparagine from L-aspartate (ammonia route): step 1/1. This chain is Aspartate--ammonia ligase, found in Bacillus cytotoxicus (strain DSM 22905 / CIP 110041 / 391-98 / NVH 391-98).